The sequence spans 111 residues: UPF0122 protein CKR_1296 (111 aa).

The protein belongs to the UPF0122 family.

In terms of biological role, might take part in the signal recognition particle (SRP) pathway. This is inferred from the conservation of its genetic proximity to ftsY/ffh. May be a regulatory protein. In Clostridium kluyveri (strain NBRC 12016), this protein is UPF0122 protein CKR_1296.